The chain runs to 348 residues: Serpentine receptor class beta-7 (348 aa).

The next 7 helical transmembrane spans lie at 31 to 51, 63 to 83, 107 to 127, 145 to 165, 191 to 211, 241 to 261, and 280 to 300; these read QLIM…FQLL, LVGY…EAFI, GNLL…SITF, FLGP…ILLI, MFFI…FLLL, ISVI…TILL, and GAFM…SVYF.

Belongs to the nematode receptor-like protein srb family.

It is found in the membrane. This Caenorhabditis elegans protein is Serpentine receptor class beta-7 (srb-7).